The following is a 222-amino-acid chain: MKKAVCLLSGGMDSTTLAYVAKDTGYDIVALHFTYGQRTEAKERECARAVAKNLDALDFVEISLEHFTKIGASSLTDTSIPVEEYAGEEEGVPSTYVPFRNANLLAIATSLAEARRAEAVFIGVQTGDYPGYPDCRPEFIEAFQRAVDLGTAAEPRIVLMTPFVRMSKVDIVRKGLALGVPYELTWSCYQNDDRACGVCSSCHYRREAFRELGLEDPIEYER.

8-18 (LSGGMDSTTLA) is a binding site for ATP. Positions 188, 196, 199, and 202 each coordinate Zn(2+).

The protein belongs to the QueC family. It depends on Zn(2+) as a cofactor.

The catalysed reaction is 7-carboxy-7-deazaguanine + NH4(+) + ATP = 7-cyano-7-deazaguanine + ADP + phosphate + H2O + H(+). It functions in the pathway purine metabolism; 7-cyano-7-deazaguanine biosynthesis. Its function is as follows. Catalyzes the ATP-dependent conversion of 7-carboxy-7-deazaguanine (CDG) to 7-cyano-7-deazaguanine (preQ(0)). The polypeptide is 7-cyano-7-deazaguanine synthase (Methanoculleus marisnigri (strain ATCC 35101 / DSM 1498 / JR1)).